Consider the following 312-residue polypeptide: Ribosomal protein L11 methyltransferase (312 aa).

Residues Thr-164, Gly-185, Asp-207, and Asn-249 each contribute to the S-adenosyl-L-methionine site.

Belongs to the methyltransferase superfamily. PrmA family.

The protein localises to the cytoplasm. The enzyme catalyses L-lysyl-[protein] + 3 S-adenosyl-L-methionine = N(6),N(6),N(6)-trimethyl-L-lysyl-[protein] + 3 S-adenosyl-L-homocysteine + 3 H(+). Its function is as follows. Methylates ribosomal protein L11. In Clostridium novyi (strain NT), this protein is Ribosomal protein L11 methyltransferase.